We begin with the raw amino-acid sequence, 277 residues long: Leucine-rich repeat-containing protein 10 (277 aa).

7 LRR repeats span residues 53–74 (ELVK…LGQL), 76–97 (NLQI…VCTL), 99–120 (QLCI…LSLL), 122–143 (NLRT…VCEL), 145–167 (LLKT…RRLQ), 168–189 (ELRT…LLHM), and 191–212 (FLEV…AHLS).

The protein localises to the nucleus. Its function is as follows. May play important roles in cardiac development and/or cardiac function. This chain is Leucine-rich repeat-containing protein 10 (LRRC10), found in Homo sapiens (Human).